A 137-amino-acid polypeptide reads, in one-letter code: Large ribosomal subunit protein uL16 (137 aa).

It belongs to the universal ribosomal protein uL16 family. Part of the 50S ribosomal subunit.

In terms of biological role, binds 23S rRNA and is also seen to make contacts with the A and possibly P site tRNAs. The sequence is that of Large ribosomal subunit protein uL16 from Wolbachia pipientis subsp. Culex pipiens (strain wPip).